Here is a 189-residue protein sequence, read N- to C-terminus: Photosystem I assembly protein Ycf4 (189 aa).

The next 2 helical transmembrane spans lie at 25-45 (SVYF…LAGL) and 62-82 (LVFI…SLAG).

This sequence belongs to the Ycf4 family.

The protein resides in the cellular thylakoid membrane. Seems to be required for the assembly of the photosystem I complex. The polypeptide is Photosystem I assembly protein Ycf4 (Synechococcus sp. (strain JA-2-3B'a(2-13)) (Cyanobacteria bacterium Yellowstone B-Prime)).